Reading from the N-terminus, the 189-residue chain is Peptidyl-tRNA hydrolase (189 aa).

Y16 provides a ligand contact to tRNA. H21 functions as the Proton acceptor in the catalytic mechanism. 3 residues coordinate tRNA: F67, N69, and N115.

This sequence belongs to the PTH family. In terms of assembly, monomer.

It localises to the cytoplasm. It catalyses the reaction an N-acyl-L-alpha-aminoacyl-tRNA + H2O = an N-acyl-L-amino acid + a tRNA + H(+). Functionally, hydrolyzes ribosome-free peptidyl-tRNAs (with 1 or more amino acids incorporated), which drop off the ribosome during protein synthesis, or as a result of ribosome stalling. Its function is as follows. Catalyzes the release of premature peptidyl moieties from peptidyl-tRNA molecules trapped in stalled 50S ribosomal subunits, and thus maintains levels of free tRNAs and 50S ribosomes. This chain is Peptidyl-tRNA hydrolase, found in Legionella pneumophila (strain Corby).